The chain runs to 315 residues: Mitochondrial glycine transporter (315 aa).

Solcar repeat units follow at residues 19 to 102 (SKTT…LRTG), 125 to 206 (TANL…LKRR), and 221 to 305 (KSSS…LILR). Transmembrane regions (helical) follow at residues 25 to 50 (FTAG…TRVQ), 77 to 103 (GTLP…RTGL), 128 to 153 (LATG…VRYE), 181 to 204 (GFGA…EQLK), 225 to 251 (INFV…KTRL), and 280 to 298 (GLGL…AWTV).

The protein belongs to the mitochondrial carrier (TC 2.A.29) family. SLC25A38 subfamily.

It is found in the mitochondrion inner membrane. The catalysed reaction is glycine(in) = glycine(out). Functionally, mitochondrial glycine transporter that imports glycine into the mitochondrial matrix. Plays an important role in providing glycine for the first enzymatic step in heme biosynthesis, the condensation of glycine with succinyl-CoA to produce 5-aminolevulinate (ALA) in the mitochondrial matrix. The protein is Mitochondrial glycine transporter of Aspergillus niger (strain ATCC MYA-4892 / CBS 513.88 / FGSC A1513).